A 345-amino-acid chain; its full sequence is Acetylserotonin O-methyltransferase (345 aa).

S-adenosyl-L-methionine contacts are provided by residues Tyr-147, Trp-164, Asp-210, 235–237 (GDF), and Arg-252. His-255 serves as the catalytic Proton donor/acceptor. The substrate site is built by Asp-256, Asn-302, and Gln-306.

Belongs to the class I-like SAM-binding methyltransferase superfamily. Cation-independent O-methyltransferase family. As to quaternary structure, homodimer. Expressed in the pineal gland (at protein level). Not detectable in retina, nor in liver.

It catalyses the reaction N-acetylserotonin + S-adenosyl-L-methionine = melatonin + S-adenosyl-L-homocysteine + H(+). Its pathway is aromatic compound metabolism; melatonin biosynthesis; melatonin from serotonin: step 1/2. Its function is as follows. Catalyzes the transfer of a methyl group onto N-acetylserotonin, producing melatonin (N-acetyl-5-methoxytryptamine). This Bos taurus (Bovine) protein is Acetylserotonin O-methyltransferase (ASMT).